The chain runs to 354 residues: tRNA N6-adenosine threonylcarbamoyltransferase (354 aa).

Residues H111 and H115 each contribute to the Fe cation site. Residues L134 to G138, D167, G180, and N279 contribute to the substrate site. D319 is a Fe cation binding site.

This sequence belongs to the KAE1 / TsaD family. Requires Fe(2+) as cofactor.

The protein localises to the cytoplasm. It catalyses the reaction L-threonylcarbamoyladenylate + adenosine(37) in tRNA = N(6)-L-threonylcarbamoyladenosine(37) in tRNA + AMP + H(+). Required for the formation of a threonylcarbamoyl group on adenosine at position 37 (t(6)A37) in tRNAs that read codons beginning with adenine. Is involved in the transfer of the threonylcarbamoyl moiety of threonylcarbamoyl-AMP (TC-AMP) to the N6 group of A37, together with TsaE and TsaB. TsaD likely plays a direct catalytic role in this reaction. This Neisseria meningitidis serogroup A / serotype 4A (strain DSM 15465 / Z2491) protein is tRNA N6-adenosine threonylcarbamoyltransferase.